A 912-amino-acid chain; its full sequence is MSGKGGWAWWWARLPLCLLLSLYAPWVPSSLGKPKGHPHMNSIRIDGDITLGGLFPVHGRGSEGKACGELKKEKGIHRLEAMLFALDRINNDPDLLPNITLGARILDTCSRDTHALEQSLTFVQALIEKDGTEVRCGSGGPPIITKPERVVGVIGASGSSVSIMVANILRLFKIPQISYASTAPDLSDNSRYDFFSRVVPSDTYQAQAMVDIVRALKWNYVSTLASEGSYGESGVEAFIQKSRENGGVCIAQSVKIPREPKTGEFDKIIKRLLETSNARGIIIFANEDDIRRVLEAARRANQTGHFFWMGSDSWGSKSAPVLRLEEVAEGAVTILPKRMSVRGFDRYFSSRTLDNNRRNIWFAEFWEDNFHCKLSRHALKKGSHIKKCTNRERIGQDSAYEQEGKVQFVIDAVYAMGHALHAMHRDLCPGRVGLCPRMDPVDGTQLLKYIRNVNFSGIAGNPVTFNENGDAPGRYDIYQYQLRNGSAEYKVIGSWTDHLHLRIERMQWPGSGQQLPRSICSLPCQPGERKKTVKGMACCWHCEPCTGYQYQVDRYTCKTCPYDMRPTENRTSCQPIPIVKLEWDSPWAVLPLFLAVVGIAATLFVVVTFVRYNDTPIVKASGRELSYVLLAGIFLCYATTFLMIAEPDLGTCSLRRIFLGLGMSISYAALLTKTNRIYRIFEQGKRSVSAPRFISPASQLAITFILISLQLLGICVWFVVDPSHSVVDFQDQRTLDPRFARGVLKCDISDLSLICLLGYSMLLMVTCTVYAIKTRGVPETFNEAKPIGFTMYTTCIVWLAFIPIFFGTSQSADKLYIQTTTLTVSVSLSASVSLGMLYMPKVYIILFHPEQNVPKRKRSLKAVVTAATMSNKFTQKGNFRPNGEAKSELCENLETPALATKQTYVTYTNHAI.

The first 32 residues, 1 to 32 (MSGKGGWAWWWARLPLCLLLSLYAPWVPSSLG), serve as a signal peptide directing secretion. At 33-587 (KPKGHPHMNS…IVKLEWDSPW (555 aa)) the chain is on the extracellular side. Cys-67 and Cys-109 are disulfide-bonded. The N-linked (GlcNAc...) asparagine glycan is linked to Asn-98. L-glutamate-binding positions include Ser-159, 180–182 (AST), and Tyr-230. Disulfide bonds link Cys-249/Cys-538, Cys-372/Cys-388, Cys-428/Cys-435, Cys-520/Cys-539, Cys-524/Cys-542, Cys-545/Cys-557, and Cys-560/Cys-573. N-linked (GlcNAc...) asparagine glycosylation occurs at Asn-301. An L-glutamate-binding site is contributed by Asp-312. Lys-405 lines the L-glutamate pocket. Residues Asn-454 and Asn-484 are each glycosylated (N-linked (GlcNAc...) asparagine). The N-linked (GlcNAc...) asparagine glycan is linked to Asn-569. The helical transmembrane segment at 588-610 (AVLPLFLAVVGIAATLFVVVTFV) threads the bilayer. Residues 611 to 624 (RYNDTPIVKASGRE) lie on the Cytoplasmic side of the membrane. The chain crosses the membrane as a helical span at residues 625–645 (LSYVLLAGIFLCYATTFLMIA). At 646–656 (EPDLGTCSLRR) the chain is on the extracellular side. A helical membrane pass occupies residues 657–675 (IFLGLGMSISYAALLTKTN). The Cytoplasmic segment spans residues 676–699 (RIYRIFEQGKRSVSAPRFISPASQ). Residues 700–720 (LAITFILISLQLLGICVWFVV) form a helical membrane-spanning segment. At 721–750 (DPSHSVVDFQDQRTLDPRFARGVLKCDISD) the chain is on the extracellular side. The helical transmembrane segment at 751-772 (LSLICLLGYSMLLMVTCTVYAI) threads the bilayer. Topologically, residues 773–785 (KTRGVPETFNEAK) are cytoplasmic. Residues 786–808 (PIGFTMYTTCIVWLAFIPIFFGT) traverse the membrane as a helical segment. Over 809–821 (SQSADKLYIQTTT) the chain is Extracellular. The helical transmembrane segment at 822 to 847 (LTVSVSLSASVSLGMLYMPKVYIILF) threads the bilayer. The Cytoplasmic portion of the chain corresponds to 848-912 (HPEQNVPKRK…TYVTYTNHAI (65 aa)).

Belongs to the G-protein coupled receptor 3 family. As to quaternary structure, interacts with PICK1. Is widely distributed in the CNS. Predominant expression is seen in the granule cells of the cerebellum.

It is found in the cell membrane. In terms of biological role, G-protein coupled receptor for glutamate. Ligand binding causes a conformation change that triggers signaling via guanine nucleotide-binding proteins (G proteins) and modulates the activity of down-stream effectors. Signaling inhibits adenylate cyclase activity. The polypeptide is Metabotropic glutamate receptor 4 (Grm4) (Rattus norvegicus (Rat)).